Here is a 232-residue protein sequence, read N- to C-terminus: Clarin-1 (232 aa).

A helical transmembrane segment spans residues 8-28; sequence IIFCMAGVLSFLCALGVVTAV. The N-linked (GlcNAc...) asparagine glycan is linked to N48. The next 2 membrane-spanning stretches (helical) occupy residues 101–121 and 135–155; these read IILF…FFMY and LGLY…MILF. Residue N184 is glycosylated (N-linked (GlcNAc...) asparagine). A helical transmembrane segment spans residues 186–206; the sequence is TTSFWVVFICFFVHFLNGLLI.

Belongs to the clarin family.

It localises to the cell membrane. Functionally, may have a role in the excitatory ribbon synapse junctions between hair cells and cochlear ganglion cells and presumably also in analogous synapses within the retina. The protein is Clarin-1 (Clrn1) of Mus musculus (Mouse).